Consider the following 95-residue polypeptide: Protein TusB (95 aa).

Belongs to the DsrH/TusB family. Heterohexamer, formed by a dimer of trimers. The hexameric TusBCD complex contains 2 copies each of TusB, TusC and TusD. The TusBCD complex interacts with TusE.

It is found in the cytoplasm. In terms of biological role, part of a sulfur-relay system required for 2-thiolation of 5-methylaminomethyl-2-thiouridine (mnm(5)s(2)U) at tRNA wobble positions. The protein is Protein TusB of Buchnera aphidicola subsp. Baizongia pistaciae (strain Bp).